Here is a 334-residue protein sequence, read N- to C-terminus: Glyceraldehyde-3-phosphate dehydrogenase (334 aa).

NAD(+)-binding positions include 12-13 (RI), D37, R81, and S123. Residues 153-155 (SCT) and T184 each bind D-glyceraldehyde 3-phosphate. C154 (nucleophile) is an active-site residue. N185 lines the NAD(+) pocket. Residues R199, 212 to 213 (TG), and R235 contribute to the D-glyceraldehyde 3-phosphate site. N314 lines the NAD(+) pocket.

Belongs to the glyceraldehyde-3-phosphate dehydrogenase family. As to quaternary structure, homotetramer.

Its subcellular location is the cytoplasm. The catalysed reaction is D-glyceraldehyde 3-phosphate + phosphate + NAD(+) = (2R)-3-phospho-glyceroyl phosphate + NADH + H(+). It participates in carbohydrate degradation; glycolysis; pyruvate from D-glyceraldehyde 3-phosphate: step 1/5. Functionally, catalyzes the oxidative phosphorylation of glyceraldehyde 3-phosphate (G3P) to 1,3-bisphosphoglycerate (BPG) using the cofactor NAD. The first reaction step involves the formation of a hemiacetal intermediate between G3P and a cysteine residue, and this hemiacetal intermediate is then oxidized to a thioester, with concomitant reduction of NAD to NADH. The reduced NADH is then exchanged with the second NAD, and the thioester is attacked by a nucleophilic inorganic phosphate to produce BPG. The protein is Glyceraldehyde-3-phosphate dehydrogenase (gap) of Pseudomonas aeruginosa (strain ATCC 15692 / DSM 22644 / CIP 104116 / JCM 14847 / LMG 12228 / 1C / PRS 101 / PAO1).